Reading from the N-terminus, the 485-residue chain is NADH-quinone oxidoreductase subunit N (485 aa).

The next 14 membrane-spanning stretches (helical) occupy residues 8–28 (LIALLPLLIVGLTVVVVMLSI), 35–55 (FLNATLSVIGLNAALVSLWFV), 71–91 (GFAMLYTGLVLLASLATCTFA), 105–125 (FYLLVLIAALGGILLANANHL), 127–147 (SLFLGIELISLPLFGLVGYAF), 159–179 (YTILSAAASSFLLFGMALVYA), 203–223 (LLAGFGLMIVGLGFKLSLVPF), 235–255 (PAPVSTFLATASKIAIFGVVM), 271–291 (VVLAIIAFASIIFGNLMALSQ), 297–317 (LLGYSSISHLGYLLVALIALQ), 326–346 (VGVYLAGYLFSSLGAFGVVSL), 373–393 (AAVMTVMMLSLAGIPMTLGFI), 408–430 (WWLVGAVVVGSASGLYYYLRVAV), and 455–475 (IVVLISALLVLVLGVWPQPLI).

It belongs to the complex I subunit 2 family. As to quaternary structure, NDH-1 is composed of 13 different subunits. Subunits NuoA, H, J, K, L, M, N constitute the membrane sector of the complex.

It localises to the cell inner membrane. It carries out the reaction a quinone + NADH + 5 H(+)(in) = a quinol + NAD(+) + 4 H(+)(out). In terms of biological role, NDH-1 shuttles electrons from NADH, via FMN and iron-sulfur (Fe-S) centers, to quinones in the respiratory chain. The immediate electron acceptor for the enzyme in this species is believed to be ubiquinone. Couples the redox reaction to proton translocation (for every two electrons transferred, four hydrogen ions are translocated across the cytoplasmic membrane), and thus conserves the redox energy in a proton gradient. The protein is NADH-quinone oxidoreductase subunit N of Shigella sonnei (strain Ss046).